The primary structure comprises 279 residues: MDFDDHDDGDEEMPPMPVSSSYETPPQHGLAGGGMAPKPPGEIGSHVKGPSCGGGRYRECLKNHAVGIGGHAVDGCGEFMAAGEEGTIDALRCAACNCHRNFHRKESESLAGEGSPFSPAAVVPYGATPHHQFSPYYRTPAGYLHHHQHHMAAAAAAAAAAAGGHPQRPLALPSTSHSGRDDGDDLSGMVGPMSAVGPLSGMSLGAGPSGSGSGKKRFRTKFTQEQKDKMLAFAERVGWRIQKHDEAAVQQFCDEVGVKRHVLKVWMHNNKHTLGKKLP.

A compositionally biased stretch (acidic residues) spans Met-1 to Met-13. The interval Met-1 to Val-47 is disordered. A ZF-HD dimerization-type; degenerate zinc finger spans residues Tyr-57–Glu-106. The interval Ala-157–Gly-191 is disordered. Positions Lys-215–Leu-278 form a DNA-binding region, homeobox.

In terms of assembly, homo- and heterodimer with other ZFHD proteins.

Its subcellular location is the nucleus. Its function is as follows. Putative transcription factor. In Oryza sativa subsp. indica (Rice), this protein is Zinc-finger homeodomain protein 1 (ZHD1).